The primary structure comprises 856 residues: MGEARRDSSSSLQHKKPPWLKLDIPAVVPPAAEEPSFLQPLRRQAFLRSVSMPAEPARVPSPHQEPRRPVLQRQMSITQTIRRGTADWFGVSKDSDSTQKWQRKSIRHCSQRYGKLKPQVIRELDLPSQDNVSLTSTETPPPLYVGPCQLGMQKIVDPLARGRAFRLADDAADGPSAPHTPVTPGAASLCSFSSSRSGFNRLPRRRKRESVAKMSFRAAAALVKGRSVRDGTLRRAQRRSFTPASFLEEDTADFPDELDTSFFAREGVLHEELSTYPDEVFESPSEAALKDWERAPEQVDLTGGALDRSELERSHLMLPLERGWRKQKEGGAAAPQPKVRLRQEVVSTAGQRRGQRIAMPVRKLFAREKRPYGLGMVGRLTNRTYRKRIDSYVKRQIEDMDDHRPFFTYWLTFVHSLVTILAVCIYGVAPVGFSQHETVDSVLRNRGVYENVKYVQQENFWIGPSSEALIHLGAKFSPCMRQDPQVHSFIHAAREREKHSACCVRNDRSGCVQTSEEECSSTLAVWVKWPLHPSAPDLAGQKRRYGSVCHQDPRVCDEPSSEDPHEWPDDITKWPICTKSSAGNHTNHPHMDCVITGRPCCIGTKGRCEITSREYCDFMRGYFHEEATLCSQVHCMDDVCGLLPFLNPEVPDQFYRLWLSLFLHAGVLHCLVSVCFQMTVLRDLEKLAGWHRIAIIYLLSGVTGNLASAIFLPYRAEVGPAGSQFGILACLFVELFQSWQILARPWRAFFKLLAVVLFLFTFGLLPWIDNFAHISGFISGLFLSFAFLPYISFGKFDLYRKRCQIIVFQLVFLGLLAGLVVLFYFYPVRCEWCEFLTCIPFTDKFCEKYELDAQLH.

The tract at residues 1–21 (MGEARRDSSSSLQHKKPPWLK) is disordered. Topologically, residues 1 to 412 (MGEARRDSSS…HRPFFTYWLT (412 aa)) are cytoplasmic. Phosphoserine is present on residues Ser-76 and Ser-176. Residues Thr-180 and Thr-183 each carry the phosphothreonine modification. Ser-391 carries the post-translational modification Phosphoserine. A helical transmembrane segment spans residues 413–433 (FVHSLVTILAVCIYGVAPVGF). Residues 434-656 (SQHETVDSVL…NPEVPDQFYR (223 aa)) lie on the Lumenal side of the membrane. A glycan (N-linked (GlcNAc...) asparagine) is linked at Asn-584. A helical membrane pass occupies residues 657–677 (LWLSLFLHAGVLHCLVSVCFQ). Residues 678 to 692 (MTVLRDLEKLAGWHR) lie on the Cytoplasmic side of the membrane. The chain crosses the membrane as a helical span at residues 693-713 (IAIIYLLSGVTGNLASAIFLP). The Lumenal segment spans residues 714 to 715 (YR). The chain crosses the membrane as a helical span at residues 716-736 (AEVGPAGSQFGILACLFVELF). Over 737–747 (QSWQILARPWR) the chain is Cytoplasmic. The helical transmembrane segment at 748–768 (AFFKLLAVVLFLFTFGLLPWI) threads the bilayer. The Lumenal segment spans residues 769-773 (DNFAH). A helical transmembrane segment spans residues 774–794 (ISGFISGLFLSFAFLPYISFG). Residues 795–804 (KFDLYRKRCQ) lie on the Cytoplasmic side of the membrane. Residues 805 to 825 (IIVFQLVFLGLLAGLVVLFYF) form a helical membrane-spanning segment. Topologically, residues 826 to 856 (YPVRCEWCEFLTCIPFTDKFCEKYELDAQLH) are lumenal.

The protein belongs to the peptidase S54 family. In terms of assembly, homodimer, or homooligomer. Interacts with TGFA and HBEGF. Interacts with EGF; may retain EGF in the endoplasmic reticulum and regulates its degradation through the endoplasmic reticulum-associated degradation (ERAD). Interacts (via cytoplasmic N-terminus) with FRMD8/iTAP; this interaction leads to mutual protein stabilization. Interacts with ADAM17/TACE.

The protein resides in the endoplasmic reticulum membrane. Its subcellular location is the golgi apparatus membrane. Its function is as follows. Regulates ADAM17 protease, a sheddase of the epidermal growth factor (EGF) receptor ligands and TNF, thereby plays a role in sleep, cell survival, proliferation, migration and inflammation. Does not exhibit any protease activity on its own. This chain is Inactive rhomboid protein 1 (RHBDF1), found in Bos taurus (Bovine).